The sequence spans 122 residues: Small ribosomal subunit protein uS13 (122 aa).

A disordered region spans residues 97–122 (PVRGQRTRTNARTRKGPRKTVAKKKK). Over residues 101–122 (QRTRTNARTRKGPRKTVAKKKK) the composition is skewed to basic residues.

The protein belongs to the universal ribosomal protein uS13 family. In terms of assembly, part of the 30S ribosomal subunit. Forms a loose heterodimer with protein S19. Forms two bridges to the 50S subunit in the 70S ribosome.

Located at the top of the head of the 30S subunit, it contacts several helices of the 16S rRNA. In the 70S ribosome it contacts the 23S rRNA (bridge B1a) and protein L5 of the 50S subunit (bridge B1b), connecting the 2 subunits; these bridges are implicated in subunit movement. Contacts the tRNAs in the A and P-sites. The chain is Small ribosomal subunit protein uS13 from Caldanaerobacter subterraneus subsp. tengcongensis (strain DSM 15242 / JCM 11007 / NBRC 100824 / MB4) (Thermoanaerobacter tengcongensis).